Reading from the N-terminus, the 454-residue chain is Macrophage scavenger receptor types I and II (454 aa).

The disordered stretch occupies residues 1 to 22; the sequence is MAQWDSFTDQQEDTDSCSESVK. Over 1-50 the chain is Cytoplasmic; the sequence is MAQWDSFTDQQEDTDSCSESVKFDARSNTALLPPNPKNGPPLQEKLKSFK. S27 is modified (phosphoserine). Residues 51 to 73 form a helical; Signal-anchor for type II membrane protein membrane-spanning segment; sequence AALIALYLLVFAVLIPIIAIMAA. The segment at 74-109 is spacer; the sequence is QLLKWEMKNCTVGSINANSVSSSLLGRGNDSEHEVR. The Extracellular portion of the chain corresponds to 74 to 454; the sequence is QLLKWEMKNC…GEDAGVTCTL (381 aa). N-linked (GlcNAc...) asparagine glycans are attached at residues N82, N102, N143, N184, N221, N249, and N267. The stretch at 199–256 forms a coiled coil; it reads VKFQENTLKGQEEISKLKERVHNASAEIMSMKEEQVHLEQEIKREVKVLNNITNDLRL. A disordered region spans residues 267 to 347; it reads NITLIQGPPG…KGEKGSGSIL (81 aa). Positions 273–344 constitute a Collagen-like domain; sequence GPPGPPGEKG…KGQKGEKGSG (72 aa). Residues 353 to 453 form the SRCR domain; sequence VRLVGGRGPH…HGEDAGVTCT (101 aa). Disulfide bonds link C378–C442, C391–C452, and C422–C432.

As to quaternary structure, homotrimer. Interacts with MYO18A.

The protein localises to the membrane. Functionally, membrane glycoproteins implicated in the pathologic deposition of cholesterol in arterial walls during atherogenesis. Two types of receptor subunits exist. These receptors mediate the endocytosis of a diverse group of macromolecules, including modified low density lipoproteins (LDL). The chain is Macrophage scavenger receptor types I and II (MSR1) from Oryctolagus cuniculus (Rabbit).